The sequence spans 157 residues: Putative glutathione-dependent formaldehyde-activating enzyme (157 aa).

Positions 3 to 134 (LEGSCHCGAV…WVEIESREQD (132 aa)) constitute a CENP-V/GFA domain. Zn(2+) contacts are provided by Cys7, Cys9, Cys27, Cys29, Cys32, Cys79, and Cys82.

Belongs to the Gfa family. Zn(2+) serves as cofactor.

The catalysed reaction is S-(hydroxymethyl)glutathione = glutathione + formaldehyde. The protein operates within one-carbon metabolism; formaldehyde degradation; formate from formaldehyde (glutathione route): step 1/3. In terms of biological role, catalyzes the condensation of formaldehyde and glutathione to S-hydroxymethylglutathione. This Halomonas elongata (strain ATCC 33173 / DSM 2581 / NBRC 15536 / NCIMB 2198 / 1H9) protein is Putative glutathione-dependent formaldehyde-activating enzyme.